Reading from the N-terminus, the 318-residue chain is Ribose-phosphate pyrophosphokinase 1 (318 aa).

Residues D43–E45 and R102–Q103 contribute to the ATP site. The Mg(2+) site is built by H136 and D176. The active site involves K199. Residues R201, D225, and D229–T233 each bind D-ribose 5-phosphate.

Belongs to the ribose-phosphate pyrophosphokinase family. Class I subfamily. Homohexamer. It depends on Mg(2+) as a cofactor.

Its subcellular location is the cytoplasm. The enzyme catalyses D-ribose 5-phosphate + ATP = 5-phospho-alpha-D-ribose 1-diphosphate + AMP + H(+). The protein operates within metabolic intermediate biosynthesis; 5-phospho-alpha-D-ribose 1-diphosphate biosynthesis; 5-phospho-alpha-D-ribose 1-diphosphate from D-ribose 5-phosphate (route I): step 1/1. Involved in the biosynthesis of the central metabolite phospho-alpha-D-ribosyl-1-pyrophosphate (PRPP) via the transfer of pyrophosphoryl group from ATP to 1-hydroxyl of ribose-5-phosphate (Rib-5-P). This is Ribose-phosphate pyrophosphokinase 1 from Listeria innocua serovar 6a (strain ATCC BAA-680 / CLIP 11262).